Consider the following 652-residue polypeptide: Ethylmalonyl-CoA mutase (652 aa).

The 129-residue stretch at 519-647 (PLKFVVGKPG…MDIVGLVDRT (129 aa)) folds into the B12-binding domain. An adenosylcob(III)alamin-binding site is contributed by His-532.

This sequence belongs to the methylmalonyl-CoA mutase family. Homodimer. Adenosylcob(III)alamin is required as a cofactor.

The enzyme catalyses (2R)-ethylmalonyl-CoA = (2S)-methylsuccinyl-CoA. Radical enzyme that catalyzes the transformation of (2R)-ethylmalonyl-CoA to (2S)-methylsuccinyl-CoA. Is involved in the ethylmalonyl-CoA pathway for acetyl-CoA assimilation required for R.sphaeroides growth on acetate as sole carbon source. Is highly specific for its substrate, ethylmalonyl-CoA, and accepts methylmalonyl-CoA only at 0.2% relative activity. In Cereibacter sphaeroides (strain ATCC 17023 / DSM 158 / JCM 6121 / CCUG 31486 / LMG 2827 / NBRC 12203 / NCIMB 8253 / ATH 2.4.1.) (Rhodobacter sphaeroides), this protein is Ethylmalonyl-CoA mutase.